The sequence spans 319 residues: Sphingomyelinase D (319 aa).

Positions Met-1–Ala-23 are cleaved as a signal peptide. His-44 is an active-site residue. The Mg(2+) site is built by Glu-64, Asp-66, and Asp-109. The short motif at Ala-312–Trp-319 is the SMD-tail element.

The protein belongs to the sphingomyelinase D/phospholipase D family. It depends on Mg(2+) as a cofactor.

The protein localises to the secreted. The catalysed reaction is a sphingomyelin + H2O = an N-acylsphing-4-enine 1-phosphate + choline + H(+). Functionally, catalyzes the hydrolysis of sphingomyelin. Sphingomyelinases D are produced by some spider in their venoms, but also by arthropods such as ticks, or pathogenic bacteria and fungi. They might play a role in pathogenicity through different mechanisms, such as membrane destabilization and host cell penetration, but also pulmonary inflammation and cutaneous lesions. The sequence is that of Sphingomyelinase D from Ajellomyces capsulatus (strain G186AR / H82 / ATCC MYA-2454 / RMSCC 2432) (Darling's disease fungus).